Reading from the N-terminus, the 444-residue chain is Alpha-1,3-mannosyl-glycoprotein 2-beta-N-acetylglucosaminyltransferase (444 aa).

Residues 1–6 lie on the Cytoplasmic side of the membrane; it reads MARISC. The chain crosses the membrane as a helical; Signal-anchor for type II membrane protein span at residues 7–24; that stretch reads DLRFLLIPAAFMFIYIQM. The Lumenal segment spans residues 25–444; it reads RLFQTQSQYA…SVMQLGIRNS (420 aa). The stretch at 61-92 forms a coiled coil; it reads KQSRIVALEDMKNRQDEELVQLKDLIQTFEKK. Substrate-binding residues include arginine 115, aspartate 144, histidine 188, and aspartate 210. Residue aspartate 211 participates in Mn(2+) binding. The active-site Proton acceptor is the aspartate 287. Serine 318 lines the substrate pocket. An N-linked (GlcNAc...) asparagine glycan is attached at asparagine 351.

This sequence belongs to the glycosyltransferase 13 family. The cofactor is Mn(2+). Post-translationally, glycosylated. As to expression, expressed in roots, stems, leaves and flowers.

It is found in the golgi apparatus membrane. The enzyme catalyses N(4)-(alpha-D-Man-(1-&gt;3)-[alpha-D-Man-(1-&gt;3)-[alpha-D-Man-(1-&gt;6)]-alpha-D-Man-(1-&gt;6)]-beta-D-Man-(1-&gt;4)-beta-D-GlcNAc-(1-&gt;4)-beta-D-GlcNAc)-L-asparaginyl-[protein] (N-glucan mannose isomer 5A1,2) + UDP-N-acetyl-alpha-D-glucosamine = N(4)-{beta-D-GlcNAc-(1-&gt;2)-alpha-D-Man-(1-&gt;3)-[alpha-D-Man-(1-&gt;3)-[alpha-D-Man-(1-&gt;6)]-alpha-D-Man-(1-&gt;6)]-beta-D-Man-(1-&gt;4)-beta-D-GlcNAc-(1-&gt;4)-beta-D-GlcNAc}-L-asparaginyl-[protein] + UDP + H(+). Its pathway is protein modification; protein glycosylation. Initiates complex N-linked carbohydrate formation. Essential for the conversion of high-mannose to hybrid and complex N-glycans. Required for normal root growth and morphology. In Arabidopsis thaliana (Mouse-ear cress), this protein is Alpha-1,3-mannosyl-glycoprotein 2-beta-N-acetylglucosaminyltransferase.